A 66-amino-acid polypeptide reads, in one-letter code: Large ribosomal subunit protein uL29 (66 aa).

Belongs to the universal ribosomal protein uL29 family.

The polypeptide is Large ribosomal subunit protein uL29 (Lysinibacillus sphaericus (strain C3-41)).